The sequence spans 367 residues: Putative F-box protein At3g21120 (367 aa).

The region spanning Met-1–His-43 is the F-box domain.

This chain is Putative F-box protein At3g21120, found in Arabidopsis thaliana (Mouse-ear cress).